Here is a 408-residue protein sequence, read N- to C-terminus: Putative transporter AmpG 2 (408 aa).

A run of 11 helical transmembrane segments spans residues 11-31, 49-69, 84-104, 110-130, 154-174, 177-197, 224-244, 261-281, 294-311, 353-373, and 382-402; these read IFNILFILIIAFPGGLIYLLT, IGLFGLVNFIHIFKFLWGPLL, YCLVITLINCIFCVYVLTSFN, IPFVLCLVVLAFFSSIYDMLI, FRIGILISGSGALYLSTIISW, VYRTMAILCIPSLLLIIFYPL, CIVIISFMLLYRLQDSFLSIM, VGYKAFGMCATIFGGVIGGFL, VLIYHALSSLSFIYLYFL, IALITSITNVGTILIGSISGY, and YFFIVAGLCFIPAYILILYLP.

Belongs to the major facilitator superfamily.

Its subcellular location is the cell inner membrane. In Rickettsia prowazekii (strain Madrid E), this protein is Putative transporter AmpG 2 (ampG2).